We begin with the raw amino-acid sequence, 269 residues long: MGLHRDEATAMETLFRVSLRLLPVSAAVTCRSIRFPVSRPGSSHLLNRKLYNLPTSSSSSLSTKAGWLLGLGEKKKKVDLPEIVASGDPVLHEKAREVDPGEIGSERIQKIIDDMIKVMRLAPGVGLAAPQIGVPLRIIVLEDTKEYISYAPKEEILAQERRHFDLMVMVNPVLKERSNKKALFFEGCLSVDGFRAAVERYLEVVVTGYDRQGKRIEVNASGWQARILQHECDHLDGNLYVDKMVPRTFRTVDNLDLPLAEGCPKLGPQ.

The transit peptide at 1 to 60 (MGLHRDEATAMETLFRVSLRLLPVSAAVTCRSIRFPVSRPGSSHLLNRKLYNLPTSSSSS) directs the protein to the chloroplast and mitochondrion. Substrate contacts are provided by residues 123-126 (PGVG) and Gly187. Residue Cys188 participates in Zn(2+) binding. Residues 191–196 (VDGFRA) form a dimerization region. Residue His230 participates in Zn(2+) binding. Glu231 is an active-site residue. His234 contributes to the Zn(2+) binding site. Residues 236-254 (DGNLYVDKMVPRTFRTVDN) are dimerization.

Belongs to the polypeptide deformylase family. Homodimer. It depends on Zn(2+) as a cofactor. Expressed in roots, leaves, flowers and siliques.

Its subcellular location is the plastid. It localises to the chloroplast stroma. The protein localises to the mitochondrion. It carries out the reaction N-terminal N-formyl-L-methionyl-[peptide] + H2O = N-terminal L-methionyl-[peptide] + formate. Inhibited by actinonin. Functionally, removes the formyl group from the N-terminal Met of newly synthesized proteins. The polypeptide is Peptide deformylase 1A, chloroplastic/mitochondrial (PDF1A) (Arabidopsis thaliana (Mouse-ear cress)).